Consider the following 273-residue polypeptide: 2,3,4,5-tetrahydropyridine-2,6-dicarboxylate N-succinyltransferase (273 aa).

2 residues coordinate substrate: arginine 106 and aspartate 143.

This sequence belongs to the transferase hexapeptide repeat family. Homotrimer.

Its subcellular location is the cytoplasm. It carries out the reaction (S)-2,3,4,5-tetrahydrodipicolinate + succinyl-CoA + H2O = (S)-2-succinylamino-6-oxoheptanedioate + CoA. It participates in amino-acid biosynthesis; L-lysine biosynthesis via DAP pathway; LL-2,6-diaminopimelate from (S)-tetrahydrodipicolinate (succinylase route): step 1/3. The protein is 2,3,4,5-tetrahydropyridine-2,6-dicarboxylate N-succinyltransferase of Wolbachia sp. subsp. Brugia malayi (strain TRS).